The following is a 372-amino-acid chain: MPHKAPKSKLFRTRYVEDSDDETRGRSRNRSVEKSRSKSLTRSKSKSPKKSRSKSLDRSKNVKTTKSKNTNKSNKYTEEDSEDSEDSESDQDDDKSDNEQSDSELDDSESDDDETDDNESDNDKSKDNFENIIESKENDFRNIIFENINEKFAIGKFGDFEVIINRDNGYINATQLCKDCGKDYKNWNQNEKSREFVKKLSQYTGLSNTNLLTKIIGGNNVKLRGTYVHPIILTNIGNWISPTFAIKIGEWIEEWKKFSRKNTLKYYKELSKIELYSNNDKEKQIQLALQKSLGGKIEVRTKHGYVDLLTKDKIIEIKSYDNWKHALGQILAYGELYENKNKCIYLFDIPSKNEIANIKIILKKFGISLLCI.

The segment covering 1-12 (MPHKAPKSKLFR) has biased composition (basic residues). The tract at residues 1-129 (MPHKAPKSKL…SDNDKSKDNF (129 aa)) is disordered. Residues 14–36 (RYVEDSDDETRGRSRNRSVEKSR) show a composition bias toward basic and acidic residues. The span at 37-53 (SKSLTRSKSKSPKKSRS) shows a compositional bias: basic residues. Acidic residues predominate over residues 79-120 (EDSEDSEDSESDQDDDKSDNEQSDSELDDSESDDDETDDNES). The KilA-N domain maps to 151–255 (KFAIGKFGDF…IKIGEWIEEW (105 aa)).

The sequence is that of Putative KilA-N domain-containing protein L32 from Acanthamoeba polyphaga (Amoeba).